The sequence spans 89 residues: DNA-directed RNA polymerase subunit omega (89 aa).

The protein belongs to the RNA polymerase subunit omega family. As to quaternary structure, the RNAP catalytic core consists of 2 alpha, 1 beta, 1 beta' and 1 omega subunit. When a sigma factor is associated with the core the holoenzyme is formed, which can initiate transcription.

The catalysed reaction is RNA(n) + a ribonucleoside 5'-triphosphate = RNA(n+1) + diphosphate. Its function is as follows. Promotes RNA polymerase assembly. Latches the N- and C-terminal regions of the beta' subunit thereby facilitating its interaction with the beta and alpha subunits. The sequence is that of DNA-directed RNA polymerase subunit omega from Clavibacter michiganensis subsp. michiganensis (strain NCPPB 382).